The sequence spans 193 residues: Interleukin-18 (193 aa).

Positions 1–36 (MAAEQVEDYCISFVEMKFINNTLYFVAENDEDLESD) are excised as a propeptide.

The protein belongs to the IL-1 family. Forms a ternary complex with ligand-binding receptor subunit IL18R1 and signaling receptor subunit IL18RAP at the plasma membrane. Mature IL18 first binds to IL18R1 forming a low affinity binary complex, which then interacts with IL18RAP to form a high affinity ternary complex that signals inside the cell. Interacts with cargo receptor TMED10; the interaction mediates the translocation from the cytoplasm into the ERGIC (endoplasmic reticulum-Golgi intermediate compartment) and thereby secretion. Post-translationally, the pro-IL-18 precursor is processed by CASP1, CASP4 or CASP5 to yield its mature, active form. The pro-IL-18 precursor features autoinhibitory interactions between the propeptide and the post-cleavage-site region, preventing recognition by the IL18R1 receptor. Processing by CASP1, CASP4 or CASP5 induces conformational changes to generate critical receptor-binding sites. The mature form is then secreted and released in the extracellular milieu by passing through the gasdermin-D (GSDMD) pore. In contrast, cleavage by CASP3 inactivates IL18.

Its subcellular location is the cytoplasm. It is found in the cytosol. The protein resides in the secreted. In terms of biological role, pro-inflammatory cytokine primarily involved in epithelial barrier repair, polarized T-helper 1 (Th1) cell and natural killer (NK) cell immune responses. Upon binding to IL18R1 and IL18RAP, forms a signaling ternary complex which activates NF-kappa-B, triggering synthesis of inflammatory mediators. Synergizes with IL12/interleukin-12 to induce IFNG synthesis from T-helper 1 (Th1) cells and natural killer (NK) cells. Involved in transduction of inflammation downstream of pyroptosis: its mature form is specifically released in the extracellular milieu by passing through the gasdermin-D (GSDMD) pore. The sequence is that of Interleukin-18 (IL18) from Bos taurus (Bovine).